The primary structure comprises 207 residues: MSTQSTHPLKPEAPRLPPGIPESPSCQRRHTLPASEFRCLTPEDAVSAFEIEREAFISVLGVCPLYLDEIRHFLTLCPELSLGWFEEGCLVAFIIGSLWDKERLMQESLTLHRSGGHIAHLHVLAVHRAFRQQGRGPILLWRYLHHLGSQPAVRRAALMCEDALVPFYERFSFHAVGPCAITVGSLTFMELHCSLRGHPFLRRNSGC.

Residues 1-28 form a disordered region; that stretch reads MSTQSTHPLKPEAPRLPPGIPESPSCQR. A Phosphothreonine; by PKA modification is found at threonine 31. The N-acetyltransferase domain occupies 35-194; that stretch reads SEFRCLTPED…SLTFMELHCS (160 aa). Leucine 124 contributes to the substrate binding site. Residues 124 to 126 and 132 to 137 each bind acetyl-CoA; these read LAV and QQGRGP. Residue methionine 159 participates in substrate binding. 168 to 170 is an acetyl-CoA binding site; the sequence is YER. Serine 205 carries the phosphoserine modification.

This sequence belongs to the acetyltransferase family. AANAT subfamily. As to quaternary structure, monomer. Interacts with several 14-3-3 proteins, including YWHAB, YWHAE, YWHAG and YWHAZ, preferentially when phosphorylated at Thr-31. Phosphorylation on Ser-205 also allows binding to YWHAZ, but with lower affinity. The interaction with YWHAZ considerably increases affinity for arylalkylamines and acetyl-CoA and protects the enzyme from dephosphorylation and proteasomal degradation. It may also prevent thiol-dependent inactivation. CAMP-dependent phosphorylation on both N-terminal Thr-31 and C-terminal Ser-205 regulates AANAT activity by promoting interaction with 14-3-3 proteins. As to expression, highly expressed in pineal gland and at lower levels in the retina. Weak expression in several brain regions and in the pituitary gland.

The protein resides in the cytoplasm. It carries out the reaction a 2-arylethylamine + acetyl-CoA = an N-acetyl-2-arylethylamine + CoA + H(+). It participates in aromatic compound metabolism; melatonin biosynthesis; melatonin from serotonin: step 1/2. In terms of biological role, controls the night/day rhythm of melatonin production in the pineal gland. Catalyzes the N-acetylation of serotonin into N-acetylserotonin, the penultimate step in the synthesis of melatonin. The chain is Serotonin N-acetyltransferase (AANAT) from Homo sapiens (Human).